The chain runs to 93 residues: Integration host factor subunit beta (93 aa).

It belongs to the bacterial histone-like protein family. Heterodimer of an alpha and a beta chain.

Functionally, this protein is one of the two subunits of integration host factor, a specific DNA-binding protein that functions in genetic recombination as well as in transcriptional and translational control. The polypeptide is Integration host factor subunit beta (ihfB) (Cereibacter sphaeroides (strain ATCC 17023 / DSM 158 / JCM 6121 / CCUG 31486 / LMG 2827 / NBRC 12203 / NCIMB 8253 / ATH 2.4.1.) (Rhodobacter sphaeroides)).